The sequence spans 461 residues: Spermidine coumaroyl-CoA acyltransferase (461 aa).

Residues histidine 168 and aspartate 393 each act as proton acceptor in the active site.

Belongs to the plant acyltransferase family. Monomer. Mainly expressed in roots at low levels, specifically, in the root tip.

It catalyses the reaction 2 (E)-4-coumaroyl-CoA + spermidine = N(1),N(8)-bis(coumaroyl)-spermidine + 2 CoA + 2 H(+). It functions in the pathway amine and polyamine metabolism; spermidine metabolism. In terms of biological role, spermidine coumaroyl-CoA acyltransferase that mediates the conversion of spermidine into dicoumaroyl-spermidine. The protein is Spermidine coumaroyl-CoA acyltransferase of Arabidopsis thaliana (Mouse-ear cress).